A 489-amino-acid polypeptide reads, in one-letter code: Cytochrome P450 2C41 (489 aa).

Residue Cys-434 participates in heme binding.

Belongs to the cytochrome P450 family. Heme serves as cofactor.

The protein localises to the endoplasmic reticulum membrane. It is found in the microsome membrane. The catalysed reaction is an organic molecule + reduced [NADPH--hemoprotein reductase] + O2 = an alcohol + oxidized [NADPH--hemoprotein reductase] + H2O + H(+). Its function is as follows. Cytochromes P450 are a group of heme-thiolate monooxygenases. In liver microsomes, this enzyme is involved in an NADPH-dependent electron transport pathway. It oxidizes a variety of structurally unrelated compounds, including steroids, fatty acids, and xenobiotics. The chain is Cytochrome P450 2C41 (CYP2C41) from Canis lupus familiaris (Dog).